Consider the following 285-residue polypeptide: Urease accessory protein UreD (285 aa).

Belongs to the UreD family. UreD, UreF and UreG form a complex that acts as a GTP-hydrolysis-dependent molecular chaperone, activating the urease apoprotein by helping to assemble the nickel containing metallocenter of UreC. The UreE protein probably delivers the nickel.

It is found in the cytoplasm. Required for maturation of urease via the functional incorporation of the urease nickel metallocenter. This chain is Urease accessory protein UreD, found in Cenarchaeum symbiosum (strain A).